The chain runs to 468 residues: 6-phosphogluconate dehydrogenase, NAD(+)-dependent, decarboxylating (468 aa).

NAD(+)-binding positions include 9-14 (GLGVMG), 32-34 (NYT), 73-75 (VTA), and Asn-101. Substrate-binding positions include Asn-101 and 127-129 (SGG). The active-site Proton acceptor is Lys-181. 184–185 (HN) contacts substrate. Glu-188 serves as the catalytic Proton donor. Positions 189, 259, 286, 445, and 451 each coordinate substrate.

It belongs to the 6-phosphogluconate dehydrogenase family. As to quaternary structure, homodimer.

The enzyme catalyses 6-phospho-D-gluconate + NAD(+) = D-ribulose 5-phosphate + CO2 + NADH. Catalyzes the oxidative decarboxylation of 6-phosphogluconate to ribulose 5-phosphate and CO(2), with concomitant reduction of NAD to NADH. Does not contribute to oxidative pentose phosphate (PP) pathway fluxes during growth on glucose. The functional role of GntZ remains obscure. This Bacillus subtilis (strain 168) protein is 6-phosphogluconate dehydrogenase, NAD(+)-dependent, decarboxylating (gntZ).